Reading from the N-terminus, the 166-residue chain is Cyclin-dependent kinase 4 inhibitor D (166 aa).

Met1 carries the post-translational modification N-acetylmethionine. 4 ANK repeats span residues 41–69, 73–102, 106–135, and 138–166; these read FGKTALQVMMFGSPTIALELLKQGASPNV, SGTTPAHDAARTGFLDTLKVLVEHGADVNA, TGALPIHLAVREGHTSVVSFLATESDLHHR, and TGLTPLELARGRGAQELMDILQRHTVAPL.

Belongs to the CDKN2 cyclin-dependent kinase inhibitor family. As to quaternary structure, interacts with CDK6.

It localises to the nucleus. Its subcellular location is the cytoplasm. In terms of biological role, interacts strongly with CDK4 and CDK6 and inhibits them. The polypeptide is Cyclin-dependent kinase 4 inhibitor D (CDKN2D) (Bos taurus (Bovine)).